The sequence spans 220 residues: ATP-dependent Clp protease proteolytic subunit 1 (220 aa).

Residue serine 118 is the Nucleophile of the active site. Residue histidine 143 is part of the active site.

The protein belongs to the peptidase S14 family. In terms of assembly, fourteen ClpP subunits assemble into 2 heptameric rings which stack back to back to give a disk-like structure with a central cavity, resembling the structure of eukaryotic proteasomes.

It is found in the cytoplasm. It catalyses the reaction Hydrolysis of proteins to small peptides in the presence of ATP and magnesium. alpha-casein is the usual test substrate. In the absence of ATP, only oligopeptides shorter than five residues are hydrolyzed (such as succinyl-Leu-Tyr-|-NHMec, and Leu-Tyr-Leu-|-Tyr-Trp, in which cleavage of the -Tyr-|-Leu- and -Tyr-|-Trp bonds also occurs).. Its function is as follows. Cleaves peptides in various proteins in a process that requires ATP hydrolysis. Has a chymotrypsin-like activity. Plays a major role in the degradation of misfolded proteins. This is ATP-dependent Clp protease proteolytic subunit 1 from Rhodococcus jostii (strain RHA1).